The primary structure comprises 461 residues: Pancreatic triacylglycerol lipase (461 aa).

The N-terminal stretch at 1-12 (WTLSLLLGAVVG) is a signal peptide. Cystine bridges form between cysteine 16/cysteine 22 and cysteine 103/cysteine 114. The Nucleophile role is filled by serine 165. Aspartate 189 (charge relay system) is an active-site residue. Ca(2+) is bound by residues glutamate 200, arginine 203, aspartate 205, and aspartate 208. Residues cysteine 250 and cysteine 274 are joined by a disulfide bond. Histidine 276 serves as the catalytic Charge relay system. Cystine bridges form between cysteine 298–cysteine 309, cysteine 312–cysteine 317, and cysteine 445–cysteine 461. The PLAT domain occupies 351–461 (WRYRVDVTLS…EDVLLTLTAC (111 aa)).

It belongs to the AB hydrolase superfamily. Lipase family. In terms of assembly, forms a 1:1 stoichiometric complex with (pro)colipase/CLPS.

The protein localises to the secreted. The enzyme catalyses a triacylglycerol + H2O = a diacylglycerol + a fatty acid + H(+). It carries out the reaction 1,2,3-tributanoylglycerol + H2O = dibutanoylglycerol + butanoate + H(+). The catalysed reaction is 1,2,3-tri-(9Z-octadecenoyl)-glycerol + H2O = di-(9Z)-octadecenoylglycerol + (9Z)-octadecenoate + H(+). It catalyses the reaction all-trans-retinyl hexadecanoate + H2O = all-trans-retinol + hexadecanoate + H(+). The enzyme catalyses 1,2-di-(9Z-octadecenoyl)-glycerol + H2O = (9Z-octadecenoyl)-glycerol + (9Z)-octadecenoate + H(+). With respect to regulation, inhibited by bile salts, is reactivated by (pro)colipase/CLPS. In terms of biological role, plays an important role in fat metabolism. It preferentially splits the esters of long-chain fatty acids at positions 1 and 3, producing mainly 2-monoacylglycerol and free fatty acids, and shows considerably higher activity against insoluble emulsified substrates than against soluble ones. This Equus caballus (Horse) protein is Pancreatic triacylglycerol lipase (PNLIP).